A 214-amino-acid polypeptide reads, in one-letter code: UPF0301 protein NFA_55110 (214 aa).

A disordered region spans residues Met1 to Phe24.

The protein belongs to the UPF0301 (AlgH) family.

The polypeptide is UPF0301 protein NFA_55110 (Nocardia farcinica (strain IFM 10152)).